Here is a 260-residue protein sequence, read N- to C-terminus: Indole-3-glycerol phosphate synthase (260 aa).

Belongs to the TrpC family.

The enzyme catalyses 1-(2-carboxyphenylamino)-1-deoxy-D-ribulose 5-phosphate + H(+) = (1S,2R)-1-C-(indol-3-yl)glycerol 3-phosphate + CO2 + H2O. Its pathway is amino-acid biosynthesis; L-tryptophan biosynthesis; L-tryptophan from chorismate: step 4/5. This chain is Indole-3-glycerol phosphate synthase, found in Neisseria gonorrhoeae (strain ATCC 700825 / FA 1090).